The chain runs to 277 residues: Indole-3-glycerol phosphate synthase (277 aa).

It belongs to the TrpC family.

It catalyses the reaction 1-(2-carboxyphenylamino)-1-deoxy-D-ribulose 5-phosphate + H(+) = (1S,2R)-1-C-(indol-3-yl)glycerol 3-phosphate + CO2 + H2O. It participates in amino-acid biosynthesis; L-tryptophan biosynthesis; L-tryptophan from chorismate: step 4/5. This is Indole-3-glycerol phosphate synthase from Pseudomonas putida (strain GB-1).